The chain runs to 160 residues: Nucleotide-binding protein Ping_2261 (160 aa).

Belongs to the YajQ family.

Nucleotide-binding protein. The sequence is that of Nucleotide-binding protein Ping_2261 from Psychromonas ingrahamii (strain DSM 17664 / CCUG 51855 / 37).